The chain runs to 185 residues: Large ribosomal subunit protein uL5 (185 aa).

Belongs to the universal ribosomal protein uL5 family. In terms of assembly, part of the 50S ribosomal subunit; part of the 5S rRNA/L5/L18/L25 subcomplex. Contacts the 5S rRNA and the P site tRNA. Forms a bridge to the 30S subunit in the 70S ribosome.

Functionally, this is one of the proteins that bind and probably mediate the attachment of the 5S RNA into the large ribosomal subunit, where it forms part of the central protuberance. In the 70S ribosome it contacts protein S13 of the 30S subunit (bridge B1b), connecting the 2 subunits; this bridge is implicated in subunit movement. Contacts the P site tRNA; the 5S rRNA and some of its associated proteins might help stabilize positioning of ribosome-bound tRNAs. In Caulobacter vibrioides (strain NA1000 / CB15N) (Caulobacter crescentus), this protein is Large ribosomal subunit protein uL5.